Reading from the N-terminus, the 104-residue chain is UPF0235 protein RBE_0633 (104 aa).

Belongs to the UPF0235 family.

The polypeptide is UPF0235 protein RBE_0633 (Rickettsia bellii (strain RML369-C)).